Consider the following 206-residue polypeptide: N-(5'-phosphoribosyl)anthranilate isomerase (206 aa).

This sequence belongs to the TrpF family.

The enzyme catalyses N-(5-phospho-beta-D-ribosyl)anthranilate = 1-(2-carboxyphenylamino)-1-deoxy-D-ribulose 5-phosphate. It participates in amino-acid biosynthesis; L-tryptophan biosynthesis; L-tryptophan from chorismate: step 3/5. This chain is N-(5'-phosphoribosyl)anthranilate isomerase, found in Azotobacter vinelandii (strain DJ / ATCC BAA-1303).